The sequence spans 959 residues: Alanine--tRNA ligase (959 aa).

At Ser-389 the chain carries Phosphoserine. Residues His-606, His-610, Cys-725, and His-729 each coordinate Zn(2+).

This sequence belongs to the class-II aminoacyl-tRNA synthetase family. In terms of assembly, monomer. The cofactor is Zn(2+).

The protein resides in the mitochondrion. The protein localises to the cytoplasm. The catalysed reaction is tRNA(Ala) + L-alanine + ATP = L-alanyl-tRNA(Ala) + AMP + diphosphate. Catalyzes the attachment of alanine to tRNA(Ala) in a two-step reaction: alanine is first activated by ATP to form Ala-AMP and then transferred to the acceptor end of tRNA(Ala). Also edits incorrectly charged tRNA(Ala) via its editing domain. This is Alanine--tRNA ligase (ala1) from Schizosaccharomyces pombe (strain 972 / ATCC 24843) (Fission yeast).